A 295-amino-acid chain; its full sequence is Acetylglutamate kinase (295 aa).

Substrate-binding positions include 66–67 (GG), Arg-88, and Asn-193.

The protein belongs to the acetylglutamate kinase family. ArgB subfamily.

It localises to the cytoplasm. The enzyme catalyses N-acetyl-L-glutamate + ATP = N-acetyl-L-glutamyl 5-phosphate + ADP. It participates in amino-acid biosynthesis; L-arginine biosynthesis; N(2)-acetyl-L-ornithine from L-glutamate: step 2/4. Its function is as follows. Catalyzes the ATP-dependent phosphorylation of N-acetyl-L-glutamate. The polypeptide is Acetylglutamate kinase (Rhizobium etli (strain ATCC 51251 / DSM 11541 / JCM 21823 / NBRC 15573 / CFN 42)).